The primary structure comprises 305 residues: Pseudouridine-5'-phosphate glycosidase (305 aa).

The active-site Proton donor is Glu28. Substrate is bound by residues Lys89 and Val109. Residue Asp141 participates in Mn(2+) binding. A substrate-binding site is contributed by 143-145 (SAD). Residue Lys162 is the Nucleophile of the active site.

This sequence belongs to the pseudouridine-5'-phosphate glycosidase family. Homotrimer. It depends on Mn(2+) as a cofactor.

It catalyses the reaction D-ribose 5-phosphate + uracil = psi-UMP + H2O. Catalyzes the reversible cleavage of pseudouridine 5'-phosphate (PsiMP) to ribose 5-phosphate and uracil. Functions biologically in the cleavage direction, as part of a pseudouridine degradation pathway. The protein is Pseudouridine-5'-phosphate glycosidase of Dinoroseobacter shibae (strain DSM 16493 / NCIMB 14021 / DFL 12).